A 1070-amino-acid polypeptide reads, in one-letter code: MSGFGDVPDQYDPAGVEERVFSYWEAVDAYEQTVDHRADAETFFFVDGPPYTSGAAHMGTTWNKTLKDAYIRYHRMQGYDVTDRPGYDMHGLPIETKVEEQLGFESKKDIQEFGEEAFIEECKRFADDNLDGLQSDFQSFGVWMDWDNPYKTVDPSYMEAAWWAFSEVHDNGLVERGQRSISQCPRCETAIANNEVEYEDVTDPSIYVRFDLDDREGSLVVWTTTPWTIPANQFVAVDEDGDYQQVRATTPDGETDVLYVASECVEDVLSAGGYSDHEIVADHSGSDLIGWSYTPPLADAVPANPTDADGTHEVYHGDWVEADRTGLVHSAPGHGEEDFERGAELDLPVFCPVGEDGVYTDAGGKYAGAFVRDANDDIIADLEARDAMLASQTVEHSYGHCWRCDTGIIQIVTDQWFITITDVKDELLANMDTSEWHPEWARDNRFRDFVENAPDWNVSRQRYWGIPVPIWTPEDWSGDAEDVLVVGTREELAALADQDVDPASVDLHKPTVDDITITEDGTEYTRVPDVFDVWLDSSVASWGTLNYPEQEDDFDELWPADLIMEAHDQTRGWFWSQLGMGTAALGDVPYEEVLMHGYANMPDGRGMSKSKGITIEPNEVIDEYGADPMRMFLLSVTPQGDDMSFSWDETENMQRDLNILWNVFRFPRPYMALDDFDANVPAAFGGDDAGVGIADADLETVDEWLLSRLQHVKADATAHWEDFEQHRALDAVLEFVVEDLSRYYVQVVRERMWEDDASASKTAAYATMQRVLLEVVALLAPYAPFVTEELYSHLTGDRGYDTVHMADWPTVEESLRAPALEADVAVLRAAEEAGSHARQQAGRKLRWPVTRVVVDAAEDSVVDALDAHGDLLADRLNTRAIEVVEPGAAWDELAYSARADMSELGPAFGDDAGAVMNALNDARVTDRDIDALAEQVAADLGRDDIELTTEMVEFVEETPEHVAGAAFETETAAGTVYVDTELNEDVESEGYAREVVRRVQEMRKEMDLAMDAEIRLDVLVFDERVGELVARHEPLITAETRARELGEVEDGHREEWDVEGTTMILEVEAV.

Positions 50 to 60 (PYTSGAAHMGT) match the 'HIGH' region motif. Positions 606–610 (GMSKS) match the 'KMSKS' region motif. Lysine 609 is an ATP binding site.

The protein belongs to the class-I aminoacyl-tRNA synthetase family. IleS type 2 subfamily. Monomer. It depends on Zn(2+) as a cofactor.

Its subcellular location is the cytoplasm. It catalyses the reaction tRNA(Ile) + L-isoleucine + ATP = L-isoleucyl-tRNA(Ile) + AMP + diphosphate. In terms of biological role, catalyzes the attachment of isoleucine to tRNA(Ile). As IleRS can inadvertently accommodate and process structurally similar amino acids such as valine, to avoid such errors it has two additional distinct tRNA(Ile)-dependent editing activities. One activity is designated as 'pretransfer' editing and involves the hydrolysis of activated Val-AMP. The other activity is designated 'posttransfer' editing and involves deacylation of mischarged Val-tRNA(Ile). This chain is Isoleucine--tRNA ligase, found in Halobacterium salinarum (strain ATCC 700922 / JCM 11081 / NRC-1) (Halobacterium halobium).